Consider the following 511-residue polypeptide: Glycoprotein (511 aa).

The first 16 residues, 1–16 (MKCLLYLAFLFIGVNC), serve as a signal peptide directing secretion. Over 17-467 (KFTIVFPHNQ…FSSWKSSIAS (451 aa)) the chain is Virion surface. The tract at residues 18–35 (FTIVFPHNQKGNWKNVPS) is trimerization. 6 disulfides stabilise this stretch: Cys40/Cys300, Cys75/Cys108, Cys84/Cys130, Cys169/Cys174, Cys193/Cys240, and Cys235/Cys269. The fusion peptide stretch occupies residues 53 to 172 (IGTALQVKMP…QFINGKCSND (120 aa)). Asn179 is a glycosylation site (N-linked (GlcNAc...) asparagine; by host). The tract at residues 259–309 (DLFAAARFPECPEGSSISAPSQTSVDVSLIQDVERILDYSLCQETWSKIRA) is trimerization. The N-linked (GlcNAc...) asparagine; by host glycan is linked to Asn336. The segment at 383-405 (EIGPNGVLRTSLGYKFPLYMIGH) is trimerization. A helical membrane pass occupies residues 468–488 (FFFIIGLIIGLFLVLRVGIYL). The S-palmitoyl cysteine; by host moiety is linked to residue Cys489. Residues 489 to 511 (CIKLKHTKKRQIYTDIEMNRLGK) lie on the Intravirion side of the membrane. The basolateral targeting ex vivo signature appears at 496–506 (KKRQIYTDIEM).

Belongs to the vesiculovirus glycoprotein family. In terms of assembly, homotrimer. Interacts with host LDL at target cell surface. Post-translationally, glycosylated by host. Palmitoylated by host.

It is found in the virion membrane. The protein localises to the host membrane. Attaches the virus to host LDL receptors, inducing clathrin-dependent endocytosis of the virion. In the endosome, the acidic pH induces conformational changes in the glycoprotein trimer, which trigger fusion between virus and endosomal membrane. This Vesicular stomatitis Indiana virus (strain Orsay) (VSIV) protein is Glycoprotein (G).